A 207-amino-acid polypeptide reads, in one-letter code: Small ribosomal subunit protein uS4 (207 aa).

Residues 31 to 53 (KAKFDSKPGQHGRTSGARTSDFG) form a disordered region. Positions 97 to 157 (SRLDNVVYRM…EKSKKQARIV (61 aa)) constitute an S4 RNA-binding domain.

Belongs to the universal ribosomal protein uS4 family. In terms of assembly, part of the 30S ribosomal subunit. Contacts protein S5. The interaction surface between S4 and S5 is involved in control of translational fidelity.

Its function is as follows. One of the primary rRNA binding proteins, it binds directly to 16S rRNA where it nucleates assembly of the body of the 30S subunit. With S5 and S12 plays an important role in translational accuracy. The polypeptide is Small ribosomal subunit protein uS4 (Paracidovorax citrulli (strain AAC00-1) (Acidovorax citrulli)).